The primary structure comprises 540 residues: Ubiquitin carboxyl-terminal hydrolase 17-like protein E (540 aa).

The tract at residues 1 to 22 is disordered; it reads MVVSLSFPEETGGENLPSAPLE. Residues 85 to 382 form the USP domain; that stretch reads CGLQNTGNSC…NAYVLFYVQQ (298 aa). The active-site Nucleophile is cysteine 94. The active-site Proton acceptor is the histidine 341. Basic and acidic residues-rich tracts occupy residues 431-441 and 508-520; these read NREKRAKKETS and APDKENQPWHNGD. Disordered stretches follow at residues 431–461 and 499–540; these read NREKRAKKETSLGEGKVPQEVNHEKAGQKHG and RSTA…QGGR. Positions 523 to 540 are enriched in polar residues; sequence LTSQGLMSPGQLCSQGGR.

Belongs to the peptidase C19 family. USP17 subfamily. In terms of assembly, interacts with SUDS3; the interaction is direct.

The protein resides in the nucleus. The protein localises to the endoplasmic reticulum. It carries out the reaction Thiol-dependent hydrolysis of ester, thioester, amide, peptide and isopeptide bonds formed by the C-terminal Gly of ubiquitin (a 76-residue protein attached to proteins as an intracellular targeting signal).. In terms of biological role, deubiquitinating enzyme that removes conjugated ubiquitin from specific proteins to regulate different cellular processes that may include cell proliferation, progression through the cell cycle, apoptosis, cell migration, and the cellular response to viral infection. This is Ubiquitin carboxyl-terminal hydrolase 17-like protein E (Usp17le) from Mus musculus (Mouse).